Consider the following 714-residue polypeptide: G protein-coupled receptor kinase 2 (714 aa).

The segment at Met-1 to Thr-308 is N-terminal. 2 consecutive RGS domains span residues Tyr-53 to Ser-174 and Ile-177 to Leu-294. Positions Ser-141 to Lys-229 are disordered. Over residues Cys-154–Ser-175 the composition is skewed to low complexity. Composition is skewed to basic and acidic residues over residues Asp-176–Asp-190 and His-199–Gly-220. The Protein kinase domain maps to Phe-309 to Phe-574. Residues Leu-315–Val-323 and Lys-338 each bind ATP. Residue Asp-435 is the Proton acceptor of the active site. An AGC-kinase C-terminal domain is found at Thr-577–Glu-642. Phosphoserine is present on Ser-612. Thr-613 is modified (phosphothreonine). The interval Ile-667–Ser-714 is disordered. The segment covering Glu-698–Ser-714 has biased composition (low complexity).

It belongs to the protein kinase superfamily. AGC Ser/Thr protein kinase family. GPRK subfamily. In terms of tissue distribution, expressed in all larval tissues and in adult ovaries. Larval CNS staining is localized to axons projecting to the optic lobes and the mushroom bodies, in the longitudinal connectives, and in cell bodies and nerves of the ring gland corpus allatum. Adult CNS staining is detectable only in cell bodies and processes associated with the ellipsoid body of the central complex and portions of the mushroom bodies. In the wing disk, expression is confined to a stripe that parallels the anterior/posterior boundary of the wing blade and the hinge region, and weak expression in the prospective notum.

Its subcellular location is the membrane. It catalyses the reaction [G-protein-coupled receptor] + ATP = [G-protein-coupled receptor]-phosphate + ADP + H(+). Its function is as follows. Specifically phosphorylates the activated forms of G protein-coupled receptors. Required during oogenesis and embryogenesis; component of a signaling pathway that functions during egg chamber maturation. The protein is G protein-coupled receptor kinase 2 (Gprk2) of Drosophila melanogaster (Fruit fly).